Reading from the N-terminus, the 360-residue chain is POU domain, class 5, transcription factor 1 (360 aa).

Disordered stretches follow at residues 1–50 (MAGH…IGPG) and 87–118 (QGGL…CAAP). The 9aaTAD signature appears at 4–12 (HLASDFAFS). Residues 41–50 (PPGGSGIGPG) are compositionally biased toward gly residues. Ser-111 is subject to Phosphoserine; by MAPK. Lys-123 participates in a covalent cross-link: Glycyl lysine isopeptide (Lys-Gly) (interchain with G-Cter in SUMO). A POU-specific domain is found at 138 to 212 (DIKALQKDLE…LLQKWVEEAD (75 aa)). DNA is bound by residues Arg-157 and Gln-164. 2 DNA-binding regions span residues 180–186 (SQTTICR) and 193–196 (SFKN). The homeobox DNA-binding region spans 230 to 289 (RKRKRTSIENRVRGNLESMFLQCPKPTLQQISHIAQQLGLEKDVVRVWFCNRRQKGKRSS). Phosphothreonine is present on Thr-235. Phosphoserine occurs at positions 236, 289, and 290. The interval 287 to 316 (RSSSDYSQREDFEAAGSPFPGGPVSFPLAP) is disordered. Residues 302-313 (GSPFPGGPVSFP) show a composition bias toward low complexity. Residue Ser-355 is modified to Phosphoserine.

Belongs to the POU transcription factor family. Class-5 subfamily. In terms of assembly, interacts with PKM. Interacts with WWP2. Interacts with UBE2I and ZSCAN10. Interacts with PCGF1. Interacts with ESRRB; recruits ESRRB near the POU5F1-SOX2 element in the NANOG proximal promoter; the interaction is DNA independent. Interacts with ZNF322. Interacts with MAPK8 and MAPK9; the interaction allows MAPK8 and MAPK9 to phosphorylate POU5F1 on Ser-355. Interacts (when phosphorylated on Ser-355) with FBXW8. Interacts with FBXW4. Interacts with SOX2 and SOX15; binds synergistically with either SOX2 or SOX15 to DNA. Interacts with DDX56. In terms of processing, sumoylation enhances the protein stability, DNA binding and transactivation activity. Sumoylation is required for enhanced YES1 expression. Post-translationally, ubiquitinated; undergoes 'Lys-63'-linked polyubiquitination by WWP2 leading to proteasomal degradation. ERK1/2-mediated phosphorylation at Ser-111 promotes nuclear exclusion and proteasomal degradation. Phosphorylation at Thr-235 and Ser-236 decrease DNA-binding and alters ability to activate transcription.

It localises to the cytoplasm. It is found in the nucleus. In terms of biological role, transcription factor that binds to the octamer motif (5'-ATTTGCAT-3'). Forms a trimeric complex with SOX2 or SOX15 on DNA and controls the expression of a number of genes involved in embryonic development such as YES1, FGF4, UTF1 and ZFP206. Critical for early embryogenesis and for embryonic stem cell pluripotency. This Sus scrofa (Pig) protein is POU domain, class 5, transcription factor 1 (POU5F1).